Here is a 162-residue protein sequence, read N- to C-terminus: Epoxidase pydX (162 aa).

The N-terminal stretch at 1-26 (MSLIALPLRLLRLLPAITSTWVLAFA) is a signal peptide. 2 helical membrane passes run 62 to 82 (WILIVVYPINYALGVVNLFVG) and 89 to 109 (TGAMSWYTIGLLFSLAHMGYM). Residues Asn127 and Asn139 are each glycosylated (N-linked (GlcNAc...) asparagine).

This sequence belongs to the epoxidase xenD family.

Its subcellular location is the membrane. Its pathway is mycotoxin biosynthesis. In terms of biological role, epoxidase; part of the gene cluster that mediates the biosynthesis of pyrrocidines, fungal natural products containing a macrocyclic para-cyclophane connected to a decahydrofluorene ring system that show potent antibiotic activities toward Gram-negative bacteria. Within the pathway, pydX functions synergistically with pydB, pydE and pydZ to form the cyclophane. The pathway begins with the PKS-NRPS pydA which, with the help of the trans-enoyl reductase pydC, synthesizes the polyketide-tyrosyl acyl thioester product which can be reductively off-loaded by the terminal reductase (R) domain in pydA. The alpha/beta hydrolase pydG is then required to catalyze the subsequent Knoevenagel condensation that affords the 3-pyrrolin-2-one ring, whereas the four proteins pydB, pydE, pydX and pydZ then function synergistically to form the cyclophane. PydB and the membrane-bound pydX and pydZ are lipid-binding proteins that can sequester and mold the pdyG product into the inverse S-shape. Binding of the medium chain reductase pydE to the complex would trigger the cascade oxidative cyclization. PydY is involved in the Diels-Alder cycloaddition that forms the decahydrofluorene core. Additional non-enzymatic hydroxylation yields pyrrocidine A2 which can be further reduced into pyrrocidine B by an endogenous reductase. The sequence is that of Epoxidase pydX from Acremonium sp.